The following is a 502-amino-acid chain: Probable malate:quinone oxidoreductase (502 aa).

This sequence belongs to the MQO family. It depends on FAD as a cofactor.

It catalyses the reaction (S)-malate + a quinone = a quinol + oxaloacetate. It functions in the pathway carbohydrate metabolism; tricarboxylic acid cycle; oxaloacetate from (S)-malate (quinone route): step 1/1. This Synechococcus sp. (strain CC9902) protein is Probable malate:quinone oxidoreductase.